The primary structure comprises 301 residues: Oxygen-dependent coproporphyrinogen-III oxidase (301 aa).

S90 lines the substrate pocket. The a divalent metal cation site is built by H94 and H104. Residue H104 is the Proton donor of the active site. Residue 106-108 participates in substrate binding; sequence NVR. A divalent metal cation-binding residues include H143 and H173. The interval 238-273 is important for dimerization; the sequence is YVEFNLVWDRGTLFGLQSGGRTESILMSLPPIVKWR. Position 256 to 258 (256 to 258) interacts with substrate; the sequence is GGR.

This sequence belongs to the aerobic coproporphyrinogen-III oxidase family. Homodimer. It depends on a divalent metal cation as a cofactor.

It is found in the cytoplasm. It carries out the reaction coproporphyrinogen III + O2 + 2 H(+) = protoporphyrinogen IX + 2 CO2 + 2 H2O. Its pathway is porphyrin-containing compound metabolism; protoporphyrin-IX biosynthesis; protoporphyrinogen-IX from coproporphyrinogen-III (O2 route): step 1/1. Functionally, involved in the heme biosynthesis. Catalyzes the aerobic oxidative decarboxylation of propionate groups of rings A and B of coproporphyrinogen-III to yield the vinyl groups in protoporphyrinogen-IX. The chain is Oxygen-dependent coproporphyrinogen-III oxidase from Nitrosomonas eutropha (strain DSM 101675 / C91 / Nm57).